A 1100-amino-acid chain; its full sequence is DNA-directed RNA polymerase subunit beta (1100 aa).

A disordered region spans residues 1064 to 1100 (YEEDKEVDLMADVNQRRTPSRPTYESMSVGDIDDDDD). The span at 1079 to 1089 (RRTPSRPTYES) shows a compositional bias: polar residues.

This sequence belongs to the RNA polymerase beta chain family. In terms of assembly, in cyanobacteria the RNAP catalytic core is composed of 2 alpha, 1 beta, 1 beta', 1 gamma and 1 omega subunit. When a sigma factor is associated with the core the holoenzyme is formed, which can initiate transcription.

The catalysed reaction is RNA(n) + a ribonucleoside 5'-triphosphate = RNA(n+1) + diphosphate. DNA-dependent RNA polymerase catalyzes the transcription of DNA into RNA using the four ribonucleoside triphosphates as substrates. This is DNA-directed RNA polymerase subunit beta from Synechococcus sp. (strain ATCC 27144 / PCC 6301 / SAUG 1402/1) (Anacystis nidulans).